The chain runs to 293 residues: Ribosomal protein L11 methyltransferase (293 aa).

S-adenosyl-L-methionine contacts are provided by T145, G166, D188, and N230.

It belongs to the methyltransferase superfamily. PrmA family.

It is found in the cytoplasm. The catalysed reaction is L-lysyl-[protein] + 3 S-adenosyl-L-methionine = N(6),N(6),N(6)-trimethyl-L-lysyl-[protein] + 3 S-adenosyl-L-homocysteine + 3 H(+). Its function is as follows. Methylates ribosomal protein L11. This Citrobacter koseri (strain ATCC BAA-895 / CDC 4225-83 / SGSC4696) protein is Ribosomal protein L11 methyltransferase.